The chain runs to 284 residues: 2-dehydro-3-deoxyphosphooctonate aldolase (284 aa).

The protein belongs to the KdsA family.

The protein localises to the cytoplasm. It carries out the reaction D-arabinose 5-phosphate + phosphoenolpyruvate + H2O = 3-deoxy-alpha-D-manno-2-octulosonate-8-phosphate + phosphate. It functions in the pathway carbohydrate biosynthesis; 3-deoxy-D-manno-octulosonate biosynthesis; 3-deoxy-D-manno-octulosonate from D-ribulose 5-phosphate: step 2/3. The protein operates within bacterial outer membrane biogenesis; lipopolysaccharide biosynthesis. This is 2-dehydro-3-deoxyphosphooctonate aldolase from Burkholderia multivorans (strain ATCC 17616 / 249).